We begin with the raw amino-acid sequence, 178 residues long: MTQLSSNDVPSMGRRQFMNLLTFGTATGVALGALYPVANYFMPLRAGGGGGGTSAKDELGNPVTKTGWLASHQAGDRSLVQGLKGDPTYLIVNSEGEIGEFGLNAICTHLGCVVPWDSGANKFICPCHGSQYDTNGKVVRGPAPLSLALAHVDVDDDAVLVKQWSETDFRTNENPWWA.

A helical transmembrane segment spans residues 20-42 (LLTFGTATGVALGALYPVANYFM). Positions 65 to 161 (KTGWLASHQA…VDVDDDAVLV (97 aa)) constitute a Rieske domain. Residues Cys107, His109, Cys125, and His128 each contribute to the [2Fe-2S] cluster site. A disulfide bridge links Cys112 with Cys127.

The protein belongs to the Rieske iron-sulfur protein family. In terms of assembly, the 4 large subunits of the cytochrome b6-f complex are cytochrome b6, subunit IV (17 kDa polypeptide, PetD), cytochrome f and the Rieske protein, while the 4 small subunits are PetG, PetL, PetM and PetN. The complex functions as a dimer. Requires [2Fe-2S] cluster as cofactor.

The protein localises to the cellular thylakoid membrane. The catalysed reaction is 2 oxidized [plastocyanin] + a plastoquinol + 2 H(+)(in) = 2 reduced [plastocyanin] + a plastoquinone + 4 H(+)(out). Its function is as follows. Component of the cytochrome b6-f complex, which mediates electron transfer between photosystem II (PSII) and photosystem I (PSI), cyclic electron flow around PSI, and state transitions. The polypeptide is Cytochrome b6-f complex iron-sulfur subunit (Prochlorococcus marinus subsp. pastoris (strain CCMP1986 / NIES-2087 / MED4)).